Reading from the N-terminus, the 286-residue chain is ATP synthase gamma chain (286 aa).

This sequence belongs to the ATPase gamma chain family. As to quaternary structure, F-type ATPases have 2 components, CF(1) - the catalytic core - and CF(0) - the membrane proton channel. CF(1) has five subunits: alpha(3), beta(3), gamma(1), delta(1), epsilon(1). CF(0) has three main subunits: a, b and c.

It localises to the cell membrane. In terms of biological role, produces ATP from ADP in the presence of a proton gradient across the membrane. The gamma chain is believed to be important in regulating ATPase activity and the flow of protons through the CF(0) complex. In Bacillus cereus (strain G9842), this protein is ATP synthase gamma chain.